Consider the following 263-residue polypeptide: HTH-type transcriptional repressor NanR (263 aa).

Residues 1 to 22 (MGLMNAFDSQTEDSSPAIGRNL) form a disordered region. The 69-residue stretch at 30–98 (KKLSEMVEEE…NGERARVSRP (69 aa)) folds into the HTH gntR-type domain. Residues 58-77 (ERELMAFFNVGRPSVREALA) constitute a DNA-binding region (H-T-H motif).

It belongs to the NanR family.

In terms of biological role, transcriptional repressor that controls expression of the genes required for the catabolism of sialic acids. The polypeptide is HTH-type transcriptional repressor NanR (Shigella dysenteriae serotype 1 (strain Sd197)).